The sequence spans 347 residues: 3-isopropylmalate dehydrogenase (347 aa).

4 residues coordinate substrate: arginine 87, arginine 97, arginine 121, and aspartate 212. Mg(2+) is bound by residues aspartate 212, aspartate 236, and aspartate 240. Position 272 to 284 (272 to 284) interacts with NAD(+); that stretch reads GSAPDIAGQGTAD.

It belongs to the isocitrate and isopropylmalate dehydrogenases family. LeuB type 2 subfamily. As to quaternary structure, homodimer. It depends on Mg(2+) as a cofactor. Requires Mn(2+) as cofactor.

Its subcellular location is the cytoplasm. It catalyses the reaction (2R,3S)-3-isopropylmalate + NAD(+) = 4-methyl-2-oxopentanoate + CO2 + NADH. The protein operates within amino-acid biosynthesis; L-leucine biosynthesis; L-leucine from 3-methyl-2-oxobutanoate: step 3/4. Catalyzes the oxidation of 3-carboxy-2-hydroxy-4-methylpentanoate (3-isopropylmalate) to 3-carboxy-4-methyl-2-oxopentanoate. The product decarboxylates to 4-methyl-2 oxopentanoate. The sequence is that of 3-isopropylmalate dehydrogenase from Saccharopolyspora erythraea (strain ATCC 11635 / DSM 40517 / JCM 4748 / NBRC 13426 / NCIMB 8594 / NRRL 2338).